The primary structure comprises 493 residues: Glutamyl-tRNA(Gln) amidotransferase subunit A (493 aa).

Catalysis depends on charge relay system residues K78 and S158. S182 serves as the catalytic Acyl-ester intermediate.

The protein belongs to the amidase family. GatA subfamily. In terms of assembly, heterotrimer of A, B and C subunits.

The enzyme catalyses L-glutamyl-tRNA(Gln) + L-glutamine + ATP + H2O = L-glutaminyl-tRNA(Gln) + L-glutamate + ADP + phosphate + H(+). Allows the formation of correctly charged Gln-tRNA(Gln) through the transamidation of misacylated Glu-tRNA(Gln) in organisms which lack glutaminyl-tRNA synthetase. The reaction takes place in the presence of glutamine and ATP through an activated gamma-phospho-Glu-tRNA(Gln). This Rickettsia rickettsii (strain Iowa) protein is Glutamyl-tRNA(Gln) amidotransferase subunit A.